The chain runs to 284 residues: RNase adapter protein RapZ (284 aa).

Residue 8-15 coordinates ATP; the sequence is GRSGSGKS. GTP is bound at residue 56–59; it reads DVRN. The tract at residues 266–284 is RNA-binding; it reads RARGKNVQSRHRTLEKRKQ.

The protein belongs to the RapZ-like family. RapZ subfamily. As to quaternary structure, homotrimer.

In terms of biological role, modulates the synthesis of GlmS, by affecting the processing and stability of the regulatory small RNA GlmZ. When glucosamine-6-phosphate (GlcN6P) concentrations are high in the cell, RapZ binds GlmZ and targets it to cleavage by RNase E. Consequently, GlmZ is inactivated and unable to activate GlmS synthesis. Under low GlcN6P concentrations, RapZ is sequestered and inactivated by an other regulatory small RNA, GlmY, preventing GlmZ degradation and leading to synthesis of GlmS. This chain is RNase adapter protein RapZ, found in Yersinia pseudotuberculosis serotype O:1b (strain IP 31758).